A 291-amino-acid polypeptide reads, in one-letter code: Feruloyl esterase B (291 aa).

Residues 1–18 (MLVRSFLGFAVLAATCLA) form the signal peptide. A glycan (N-linked (GlcNAc...) asparagine) is linked at N117. The Charge relay system role is filled by S136. The N-linked (GlcNAc...) asparagine glycan is linked to N179.

This sequence belongs to the carbohydrate esterase 1 (CE1) family. Feruloyl esterase type B subfamily.

The protein resides in the secreted. It catalyses the reaction feruloyl-polysaccharide + H2O = ferulate + polysaccharide.. In terms of biological role, feruloyl esterase which acts in synergy with xylanases in degradation of plant cell walls. Hydrolyzes the ester linkage of hydroxycinnamic acids (ferulic acid (FA) and p-coumaric acid) and diferulates present in plant cell walls. Is active on substrates containing ferulic acid ester linked to the C-5 and C-2 linkages of arabinofuranose, while it was found capable of de-esterifying acetylated glucuronoxylans. Efficiently releases ferulic acid (FA) from destarched wheat bran when incubated with an M3 xylanase. This is Feruloyl esterase B (Fae1a) from Thermothelomyces thermophilus (strain ATCC 42464 / BCRC 31852 / DSM 1799) (Sporotrichum thermophile).